Reading from the N-terminus, the 244-residue chain is uncharacterized protein (244 aa).

The span at 1–11 (MSRRSRSRSRS) shows a compositional bias: basic residues. Disordered stretches follow at residues 1 to 104 (MSRR…TLNE) and 213 to 244 (ARQK…KFGK). Positions 12–31 (PKRDREERKRREDRDRDRER) are enriched in basic and acidic residues. Positions 32–46 (KRDRKDRERKRRHRS) are enriched in basic residues. Residues 63 to 75 (FREERRRRERNES) are compositionally biased toward basic and acidic residues. Residues 77-89 (KLPPPPPPPPSDP) are compositionally biased toward pro residues. The segment covering 213 to 223 (ARQKSDMKKNE) has biased composition (basic and acidic residues). Polar residues predominate over residues 224 to 234 (QQAILNKSGNS).

This is an uncharacterized protein from Caenorhabditis elegans.